Here is a 134-residue protein sequence, read N- to C-terminus: uncharacterized protein (134 aa).

This is an uncharacterized protein from Ictaluridae (bullhead catfishes).